The chain runs to 163 residues: Cytochrome c-type biogenesis protein CcmE (163 aa).

At 1 to 7 the chain is on the cytoplasmic side; sequence MTRKQRR. Residues 8–28 form a helical; Signal-anchor for type II membrane protein membrane-spanning segment; sequence LVFIGTCGAVLAVALGLVLWA. Over 29–163 the chain is Periplasmic; that stretch reads MSGTIVFFRS…RTASGEARAP (135 aa). Positions 122 and 126 each coordinate heme. The disordered stretch occupies residues 134–163; that stretch reads ALKKSGRWQEGAGHPAPAPPRTASGEARAP.

This sequence belongs to the CcmE/CycJ family.

The protein resides in the cell inner membrane. Its function is as follows. Heme chaperone required for the biogenesis of c-type cytochromes. Transiently binds heme delivered by CcmC and transfers the heme to apo-cytochromes in a process facilitated by CcmF and CcmH. The sequence is that of Cytochrome c-type biogenesis protein CcmE from Methylobacterium sp. (strain 4-46).